The following is a 600-amino-acid chain: NADH-quinone oxidoreductase subunit C/D (600 aa).

Residues 1-190 (MVNNMTDLTA…SPFELTKAKQ (190 aa)) form an NADH dehydrogenase I subunit C region. The NADH dehydrogenase I subunit D stretch occupies residues 214–600 (DFMFLNLGPN…IDFVMSDVDR (387 aa)).

In the N-terminal section; belongs to the complex I 30 kDa subunit family. This sequence in the C-terminal section; belongs to the complex I 49 kDa subunit family. As to quaternary structure, NDH-1 is composed of 13 different subunits. Subunits NuoB, CD, E, F, and G constitute the peripheral sector of the complex.

Its subcellular location is the cell inner membrane. The enzyme catalyses a quinone + NADH + 5 H(+)(in) = a quinol + NAD(+) + 4 H(+)(out). Its function is as follows. NDH-1 shuttles electrons from NADH, via FMN and iron-sulfur (Fe-S) centers, to quinones in the respiratory chain. The immediate electron acceptor for the enzyme in this species is believed to be ubiquinone. Couples the redox reaction to proton translocation (for every two electrons transferred, four hydrogen ions are translocated across the cytoplasmic membrane), and thus conserves the redox energy in a proton gradient. This chain is NADH-quinone oxidoreductase subunit C/D, found in Escherichia coli O6:H1 (strain CFT073 / ATCC 700928 / UPEC).